A 182-amino-acid polypeptide reads, in one-letter code: Isopentenyl-diphosphate Delta-isomerase (182 aa).

Residues His-25 and His-32 each contribute to the Mn(2+) site. Positions Leu-30–Met-164 constitute a Nudix hydrolase domain. Residue Cys-67 is part of the active site. His-69 is a binding site for Mn(2+). A Mg(2+)-binding site is contributed by Glu-87. The Mn(2+) site is built by Glu-114 and Glu-116. The active site involves Glu-116.

It belongs to the IPP isomerase type 1 family. Homodimer. Mg(2+) serves as cofactor. Requires Mn(2+) as cofactor.

The protein localises to the cytoplasm. The catalysed reaction is isopentenyl diphosphate = dimethylallyl diphosphate. It participates in isoprenoid biosynthesis; dimethylallyl diphosphate biosynthesis; dimethylallyl diphosphate from isopentenyl diphosphate: step 1/1. In terms of biological role, catalyzes the 1,3-allylic rearrangement of the homoallylic substrate isopentenyl (IPP) to its highly electrophilic allylic isomer, dimethylallyl diphosphate (DMAPP). This Escherichia coli O127:H6 (strain E2348/69 / EPEC) protein is Isopentenyl-diphosphate Delta-isomerase.